A 350-amino-acid polypeptide reads, in one-letter code: Holliday junction branch migration complex subunit RuvB (350 aa).

The segment at 1 to 20 (MIEADRLITASPREREEQQD) is disordered. A large ATPase domain (RuvB-L) region spans residues 4-184 (ADRLITASPR…FGIVQRLEFY (181 aa)). Residues I23, R24, G65, K68, T69, T70, 131–133 (EDF), R174, Y184, and R221 each bind ATP. T69 is a binding site for Mg(2+). A small ATPAse domain (RuvB-S) region spans residues 185-255 (GIDDLATIVT…IADQALNLLD (71 aa)). The tract at residues 258–350 (ERGFDHSDRR…SGDLFAVSDE (93 aa)) is head domain (RuvB-H). R294, R313, and R318 together coordinate DNA.

The protein belongs to the RuvB family. Homohexamer. Forms an RuvA(8)-RuvB(12)-Holliday junction (HJ) complex. HJ DNA is sandwiched between 2 RuvA tetramers; dsDNA enters through RuvA and exits via RuvB. An RuvB hexamer assembles on each DNA strand where it exits the tetramer. Each RuvB hexamer is contacted by two RuvA subunits (via domain III) on 2 adjacent RuvB subunits; this complex drives branch migration. In the full resolvosome a probable DNA-RuvA(4)-RuvB(12)-RuvC(2) complex forms which resolves the HJ.

It localises to the cytoplasm. The enzyme catalyses ATP + H2O = ADP + phosphate + H(+). The RuvA-RuvB-RuvC complex processes Holliday junction (HJ) DNA during genetic recombination and DNA repair, while the RuvA-RuvB complex plays an important role in the rescue of blocked DNA replication forks via replication fork reversal (RFR). RuvA specifically binds to HJ cruciform DNA, conferring on it an open structure. The RuvB hexamer acts as an ATP-dependent pump, pulling dsDNA into and through the RuvAB complex. RuvB forms 2 homohexamers on either side of HJ DNA bound by 1 or 2 RuvA tetramers; 4 subunits per hexamer contact DNA at a time. Coordinated motions by a converter formed by DNA-disengaged RuvB subunits stimulates ATP hydrolysis and nucleotide exchange. Immobilization of the converter enables RuvB to convert the ATP-contained energy into a lever motion, pulling 2 nucleotides of DNA out of the RuvA tetramer per ATP hydrolyzed, thus driving DNA branch migration. The RuvB motors rotate together with the DNA substrate, which together with the progressing nucleotide cycle form the mechanistic basis for DNA recombination by continuous HJ branch migration. Branch migration allows RuvC to scan DNA until it finds its consensus sequence, where it cleaves and resolves cruciform DNA. In Ectopseudomonas mendocina (strain ymp) (Pseudomonas mendocina), this protein is Holliday junction branch migration complex subunit RuvB.